A 173-amino-acid polypeptide reads, in one-letter code: Translation initiation factor IF-3 (173 aa).

This sequence belongs to the IF-3 family. Monomer.

The protein localises to the cytoplasm. IF-3 binds to the 30S ribosomal subunit and shifts the equilibrium between 70S ribosomes and their 50S and 30S subunits in favor of the free subunits, thus enhancing the availability of 30S subunits on which protein synthesis initiation begins. This is Translation initiation factor IF-3 from Lactiplantibacillus plantarum (strain ATCC BAA-793 / NCIMB 8826 / WCFS1) (Lactobacillus plantarum).